A 263-amino-acid polypeptide reads, in one-letter code: Probable WRKY transcription factor 62 (263 aa).

Positions 59–104 (DHQDDQSNNSSPQDSSPVLESSRKPLHKRGRKTSMAESSDYHRHES) are disordered. Residues 64 to 74 (QSNNSSPQDSS) show a composition bias toward low complexity. The segment at residues 104-174 (SSTPIYHDGF…GQHICQLHQA (71 aa)) is a DNA-binding region (WRKY).

Belongs to the WRKY group III family.

It is found in the nucleus. Transcription factor. Interacts specifically with the W box (5'-(T)TGAC[CT]-3'), a frequently occurring elicitor-responsive cis-acting element. The sequence is that of Probable WRKY transcription factor 62 (WRKY62) from Arabidopsis thaliana (Mouse-ear cress).